The following is a 160-amino-acid chain: Phosphopantetheine adenylyltransferase (160 aa).

Residue Ser-9 participates in substrate binding. ATP contacts are provided by residues 9–10 (SF) and His-17. Residues Lys-41, Thr-73, and Arg-87 each coordinate substrate. ATP contacts are provided by residues 88–90 (GMR), Glu-98, and 123–129 (YTFFSSS).

The protein belongs to the bacterial CoaD family. Homohexamer. It depends on Mg(2+) as a cofactor.

The protein resides in the cytoplasm. It carries out the reaction (R)-4'-phosphopantetheine + ATP + H(+) = 3'-dephospho-CoA + diphosphate. It participates in cofactor biosynthesis; coenzyme A biosynthesis; CoA from (R)-pantothenate: step 4/5. In terms of biological role, reversibly transfers an adenylyl group from ATP to 4'-phosphopantetheine, yielding dephospho-CoA (dPCoA) and pyrophosphate. The polypeptide is Phosphopantetheine adenylyltransferase (Roseiflexus castenholzii (strain DSM 13941 / HLO8)).